The sequence spans 237 residues: Adenosine 5'-phosphosulfate reductase (237 aa).

Residues Cys123, Cys124, Cys206, and Cys209 each contribute to the [4Fe-4S] cluster site. Cys232 (nucleophile; cysteine thiosulfonate intermediate) is an active-site residue.

This sequence belongs to the PAPS reductase family. CysH subfamily. [4Fe-4S] cluster is required as a cofactor.

The protein resides in the cytoplasm. It carries out the reaction [thioredoxin]-disulfide + sulfite + AMP + 2 H(+) = adenosine 5'-phosphosulfate + [thioredoxin]-dithiol. It participates in sulfur metabolism; hydrogen sulfide biosynthesis; sulfite from sulfate. Functionally, catalyzes the formation of sulfite from adenosine 5'-phosphosulfate (APS) using thioredoxin as an electron donor. The protein is Adenosine 5'-phosphosulfate reductase of Mycobacteroides abscessus (strain ATCC 19977 / DSM 44196 / CCUG 20993 / CIP 104536 / JCM 13569 / NCTC 13031 / TMC 1543 / L948) (Mycobacterium abscessus).